Reading from the N-terminus, the 306-residue chain is SDS degradation transcriptional activation protein (306 aa).

The 59-residue stretch at methionine 1–threonine 59 folds into the HTH lysR-type domain. The segment at residues phenylalanine 19–glutamine 38 is a DNA-binding region (H-T-H motif).

Belongs to the LysR transcriptional regulatory family.

Activates the transcription of the sdsA gene for sodium dodecyl sulfate (SDS) degradation. The sequence is that of SDS degradation transcriptional activation protein (sdsB) from Pseudomonas sp. (strain ATCC 19151).